Here is a 167-residue protein sequence, read N- to C-terminus: Probable chorismate pyruvate-lyase (167 aa).

R71, I110, and E150 together coordinate substrate.

Belongs to the UbiC family.

Its subcellular location is the cytoplasm. It carries out the reaction chorismate = 4-hydroxybenzoate + pyruvate. It functions in the pathway cofactor biosynthesis; ubiquinone biosynthesis. In terms of biological role, removes the pyruvyl group from chorismate, with concomitant aromatization of the ring, to provide 4-hydroxybenzoate (4HB) for the ubiquinone pathway. This is Probable chorismate pyruvate-lyase from Acinetobacter baylyi (strain ATCC 33305 / BD413 / ADP1).